The primary structure comprises 423 residues: UPF0229 protein Pput_0430 (423 aa).

The tract at residues 81–108 is disordered; the sequence is EFTAGEHIPRPQGGGGGGGRGKAGNSGE. Positions 92–107 are enriched in gly residues; sequence QGGGGGGGRGKAGNSG.

Belongs to the UPF0229 family.

This chain is UPF0229 protein Pput_0430, found in Pseudomonas putida (strain ATCC 700007 / DSM 6899 / JCM 31910 / BCRC 17059 / LMG 24140 / F1).